The primary structure comprises 749 residues: Poly(U)-binding-splicing factor rnp-6 (749 aa).

RRM domains lie at 102–176 (SRIY…LKVN) and 207–285 (FRVY…KCVT). 2 disordered regions span residues 323 to 388 (AGSS…PDVV) and 457 to 480 (IEEE…KMKR). The segment covering 330–354 (PSESGGSRAASPAPRAQSPATPSSS) has biased composition (low complexity). The RRM 3; atypical domain occupies 658–739 (NVIVLRNMVT…NTVKAEAYDQ (82 aa)).

Belongs to the RRM half pint family.

The protein localises to the nucleus. Its function is as follows. DNA- and RNA-binding protein, involved in several nuclear processes such as pre-mRNA splicing, apoptosis and transcription regulation. Ensures the correct splicing of genes involved in immunity to promote longevity in response to infection by pathogenic bacteria such as S.aureus. The sequence is that of Poly(U)-binding-splicing factor rnp-6 from Caenorhabditis elegans.